A 418-amino-acid chain; its full sequence is Light-independent protochlorophyllide reductase subunit N (418 aa).

C17, C42, and C103 together coordinate [4Fe-4S] cluster.

It belongs to the BchN/ChlN family. Protochlorophyllide reductase is composed of three subunits; ChlL, ChlN and ChlB. Forms a heterotetramer of two ChlB and two ChlN subunits. [4Fe-4S] cluster is required as a cofactor.

It carries out the reaction chlorophyllide a + oxidized 2[4Fe-4S]-[ferredoxin] + 2 ADP + 2 phosphate = protochlorophyllide a + reduced 2[4Fe-4S]-[ferredoxin] + 2 ATP + 2 H2O. It functions in the pathway porphyrin-containing compound metabolism; chlorophyll biosynthesis (light-independent). Its function is as follows. Component of the dark-operative protochlorophyllide reductase (DPOR) that uses Mg-ATP and reduced ferredoxin to reduce ring D of protochlorophyllide (Pchlide) to form chlorophyllide a (Chlide). This reaction is light-independent. The NB-protein (ChlN-ChlB) is the catalytic component of the complex. The sequence is that of Light-independent protochlorophyllide reductase subunit N from Prochlorococcus marinus subsp. pastoris (strain CCMP1986 / NIES-2087 / MED4).